The chain runs to 204 residues: UPF0637 protein SAS1041 (204 aa).

Belongs to the UPF0637 family.

The polypeptide is UPF0637 protein SAS1041 (Staphylococcus aureus (strain MSSA476)).